A 1224-amino-acid chain; its full sequence is DNA-directed RNA polymerase subunit beta' (1224 aa).

Cysteine 60, cysteine 62, cysteine 75, and cysteine 78 together coordinate Zn(2+). 3 residues coordinate Mg(2+): aspartate 449, aspartate 451, and aspartate 453. Residues cysteine 819, cysteine 893, cysteine 900, and cysteine 903 each contribute to the Zn(2+) site.

Belongs to the RNA polymerase beta' chain family. The RNAP catalytic core consists of 2 alpha, 1 beta, 1 beta' and 1 omega subunit. When a sigma factor is associated with the core the holoenzyme is formed, which can initiate transcription. It depends on Mg(2+) as a cofactor. Requires Zn(2+) as cofactor.

It carries out the reaction RNA(n) + a ribonucleoside 5'-triphosphate = RNA(n+1) + diphosphate. Functionally, DNA-dependent RNA polymerase catalyzes the transcription of DNA into RNA using the four ribonucleoside triphosphates as substrates. The sequence is that of DNA-directed RNA polymerase subunit beta' from Lactobacillus johnsonii (strain CNCM I-12250 / La1 / NCC 533).